We begin with the raw amino-acid sequence, 232 residues long: Small heat shock protein, chloroplastic (232 aa).

The segment covering 1–25 (MAQSVSLSTIASPILSQKPGSSVKS) has biased composition (polar residues). Disordered stretches follow at residues 1 to 35 (MAQS…SFPL) and 48 to 81 (RAQA…RKPR). The N-terminal 46 residues, 1 to 46 (MAQSVSLSTIASPILSQKPGSSVKSTPPCMASFPLRRQLPRLGLRN), are a transit peptide targeting the chloroplast. Positions 55–78 (GDNKDNSVEVHRVNKDDQGTAVER) are enriched in basic and acidic residues. Residues 124–232 (IGGGEIRVPW…ERTVIDVQIQ (109 aa)) enclose the sHSP domain.

It belongs to the small heat shock protein (HSP20) family.

It localises to the plastid. Its subcellular location is the chloroplast. This chain is Small heat shock protein, chloroplastic (HSP21), found in Pisum sativum (Garden pea).